Reading from the N-terminus, the 149-residue chain is Putative inactive group IIC secretory phospholipase A2 (149 aa).

The first 18 residues, 1-18 (MKVIAILTLLLFCSPTHS), serve as a signal peptide directing secretion. Intrachain disulfides connect cysteine 44-cysteine 142, cysteine 77-cysteine 107, cysteine 95-cysteine 112, and cysteine 97-cysteine 105. Ca(2+) is bound by residues tyrosine 45, glycine 47, and glycine 49.

This sequence belongs to the phospholipase A2 family. The cofactor is Ca(2+).

It is found in the secreted. Its function is as follows. Inactive phospholipase. The protein is Putative inactive group IIC secretory phospholipase A2 (PLA2G2C) of Homo sapiens (Human).